The sequence spans 312 residues: tRNA uridine(34) hydroxylase (312 aa).

The Rhodanese domain maps to 123–216; the sequence is DRDDVVVLDV…YGIEQGGEDF (94 aa). Cys-176 acts as the Cysteine persulfide intermediate in catalysis.

The protein belongs to the TrhO family.

It carries out the reaction uridine(34) in tRNA + AH2 + O2 = 5-hydroxyuridine(34) in tRNA + A + H2O. In terms of biological role, catalyzes oxygen-dependent 5-hydroxyuridine (ho5U) modification at position 34 in tRNAs. In Cytophaga hutchinsonii (strain ATCC 33406 / DSM 1761 / CIP 103989 / NBRC 15051 / NCIMB 9469 / D465), this protein is tRNA uridine(34) hydroxylase.